Reading from the N-terminus, the 140-residue chain is uncharacterized protein (140 aa).

N-linked (GlcNAc...) asparagine glycosylation occurs at asparagine 27. 3 consecutive transmembrane segments (helical) span residues 45-65 (FSLY…GVYA), 76-96 (VWIF…TGTV), and 116-136 (VPLC…YSMV).

Belongs to the TMEM170 family.

The protein localises to the membrane. This is an uncharacterized protein from Saccharomyces cerevisiae (strain ATCC 204508 / S288c) (Baker's yeast).